The primary structure comprises 453 residues: Adenosylmethionine-8-amino-7-oxononanoate aminotransferase (453 aa).

Residue G118 to S119 participates in pyridoxal 5'-phosphate binding. Y151 contacts substrate. D258 lines the pyridoxal 5'-phosphate pocket. 3 residues coordinate substrate: K287, G322, and R417. At K287 the chain carries N6-(pyridoxal phosphate)lysine.

Belongs to the class-III pyridoxal-phosphate-dependent aminotransferase family. BioA subfamily. As to quaternary structure, homodimer. Pyridoxal 5'-phosphate is required as a cofactor.

The protein resides in the cytoplasm. The enzyme catalyses (8S)-8-amino-7-oxononanoate + S-adenosyl-L-methionine = S-adenosyl-4-methylsulfanyl-2-oxobutanoate + (7R,8S)-7,8-diammoniononanoate. Its pathway is cofactor biosynthesis; biotin biosynthesis; 7,8-diaminononanoate from 8-amino-7-oxononanoate (SAM route): step 1/1. In terms of biological role, catalyzes the transfer of the alpha-amino group from S-adenosyl-L-methionine (SAM) to 7-keto-8-aminopelargonic acid (KAPA) to form 7,8-diaminopelargonic acid (DAPA). It is the only aminotransferase known to utilize SAM as an amino donor. The polypeptide is Adenosylmethionine-8-amino-7-oxononanoate aminotransferase (Geobacter sulfurreducens (strain ATCC 51573 / DSM 12127 / PCA)).